Reading from the N-terminus, the 103-residue chain is Small ribosomal subunit protein uS10 (103 aa).

Belongs to the universal ribosomal protein uS10 family. In terms of assembly, part of the 30S ribosomal subunit.

Involved in the binding of tRNA to the ribosomes. The protein is Small ribosomal subunit protein uS10 of Cutibacterium acnes (strain DSM 16379 / KPA171202) (Propionibacterium acnes).